A 399-amino-acid chain; its full sequence is Argininosuccinate synthase (399 aa).

ATP contacts are provided by residues 8-16 (AYSGGLDTS) and alanine 35. Tyrosine 87 provides a ligand contact to L-citrulline. Residue glycine 117 participates in ATP binding. L-aspartate is bound by residues threonine 119, asparagine 123, and aspartate 124. L-citrulline is bound at residue asparagine 123. Residues arginine 127, serine 176, serine 185, glutamate 261, and tyrosine 273 each contribute to the L-citrulline site.

It belongs to the argininosuccinate synthase family. Type 1 subfamily. Homotetramer.

It is found in the cytoplasm. The enzyme catalyses L-citrulline + L-aspartate + ATP = 2-(N(omega)-L-arginino)succinate + AMP + diphosphate + H(+). The protein operates within amino-acid biosynthesis; L-arginine biosynthesis; L-arginine from L-ornithine and carbamoyl phosphate: step 2/3. The polypeptide is Argininosuccinate synthase (Buchnera aphidicola subsp. Cinara cedri (strain Cc)).